Consider the following 218-residue polypeptide: Histone H1.1 (218 aa).

Residues 1–42 (MSEVALPAPAASTSPEKPSAGKKAKKPAKAAAAAKKKPAGPS) are disordered. Position 2 is an N-acetylserine (Ser2). Ser2 and Ser12 each carry phosphoserine. Position 17 is an N6-acetyllysine (Lys17). Residues 20-38 (AGKKAKKPAKAAAAAKKKP) show a composition bias toward basic residues. Lys37 carries the N6-(beta-hydroxybutyryl)lysine modification. In terms of domain architecture, H15 spans 39–112 (AGPSVSELIV…GASGSFKLNK (74 aa)). Ser44 is subject to Phosphoserine. Lys55 carries the N6-(beta-hydroxybutyryl)lysine modification. Residue Arg57 is modified to Citrulline. Lys67 bears the N6-(beta-hydroxybutyryl)lysine mark. Lys78 bears the N6-acetyllysine mark. Lys88 bears the N6-(beta-hydroxybutyryl)lysine mark. Lys93 bears the N6-(beta-hydroxybutyryl)lysine; alternate mark. Lys93 carries the post-translational modification N6-acetyllysine; alternate. At Ser107 the chain carries Phosphoserine; by PKC. Lys109 carries the N6-(beta-hydroxybutyryl)lysine modification. The disordered stretch occupies residues 116–218 (SVDAKPTATK…KPKKAAPKKK (103 aa)). Positions 119–149 (AKPTATKVATKTKVTSASKKPKKASGAAAAK) are enriched in low complexity. Position 125 is an N6-acetyllysine (Lys125). 2 stretches are compositionally biased toward basic residues: residues 150–183 (KSVK…KKVA) and 190–218 (KAVK…PKKK). Residue Thr206 is modified to Phosphothreonine.

The protein belongs to the histone H1/H5 family. As to quaternary structure, interacts with DFFB. In terms of processing, H1 histones are progressively phosphorylated during the cell cycle, becoming maximally phosphorylated during late G2 phase and M phase, and being dephosphorylated sharply thereafter. Citrullination at Arg-57 (H1R54ci) by PADI4 takes place within the DNA-binding site of H1 and results in its displacement from chromatin and global chromatin decondensation, thereby promoting pluripotency and stem cell maintenance.

The protein localises to the nucleus. Its subcellular location is the chromosome. Functionally, H1 histones bind to linker DNA between nucleosomes forming the macromolecular structure known as the chromatin fiber. H1 histones are necessary for the condensation of nucleosome chains into higher-order structured fibers. Also acts as a regulator of individual gene transcription through chromatin remodeling. The sequence is that of Histone H1.1 from Bos taurus (Bovine).